The following is a 221-amino-acid chain: Histone H1.3 (221 aa).

Residues methionine 1 to lysine 17 are compositionally biased toward low complexity. Residues methionine 1–serine 42 are disordered. Serine 2 carries the post-translational modification N-acetylserine. Residue serine 2 is modified to Phosphoserine. Residue lysine 17 is modified to N6-acetyllysine. Residue threonine 18 is modified to Phosphothreonine. Over residues valine 20 to alanine 36 the composition is skewed to basic residues. 2 positions are modified to N6-(beta-hydroxybutyryl)lysine: lysine 35 and lysine 53. One can recognise an H15 domain in the interval serine 37–lysine 110. A Citrulline modification is found at arginine 55. N6-(beta-hydroxybutyryl)lysine occurs at positions 65, 86, and 91. The disordered stretch occupies residues serine 87–lysine 221. Serine 105 carries the phosphoserine; by PKC modification. At lysine 107 the chain carries N6-(beta-hydroxybutyryl)lysine. Basic residues-rich tracts occupy residues lysine 120–lysine 141, lysine 150–lysine 161, lysine 170–threonine 187, and lysine 194–lysine 221.

This sequence belongs to the histone H1/H5 family. In terms of processing, H1 histones are progressively phosphorylated during the cell cycle, becoming maximally phosphorylated during late G2 phase and M phase, and being dephosphorylated sharply thereafter. Citrullination at Arg-55 (H1R54ci) by PADI4 takes place within the DNA-binding site of H1 and results in its displacement from chromatin and global chromatin decondensation, thereby promoting pluripotency and stem cell maintenance.

The protein resides in the nucleus. Its subcellular location is the chromosome. Its function is as follows. H1 histones bind to linker DNA between nucleosomes forming the macromolecular structure known as the chromatin fiber. H1 histones are necessary for the condensation of nucleosome chains into higher-order structured fibers. Also acts as a regulator of individual gene transcription through chromatin remodeling, nucleosome spacing and DNA methylation. The sequence is that of Histone H1.3 from Bos taurus (Bovine).